The primary structure comprises 121 residues: Replication protein A 14 kDa subunit (121 aa).

Residue V2 is modified to N-acetylvaline. Glycyl lysine isopeptide (Lys-Gly) (interchain with G-Cter in ubiquitin) cross-links involve residues K23, K39, and K88.

This sequence belongs to the replication factor A protein 3 family. As to quaternary structure, component of the canonical replication protein A complex (RPA), a heterotrimer composed of RPA1, RPA2 and RPA3. Also a component of the aRPA, the alternative replication protein A complex, a trimeric complex similar to the replication protein A complex/RPA but where RPA1 and RPA3 are associated with RPA4 instead of RPA2. Interacts with BRIP1/FANCJ via the RPA1 subunit; following DNA damage they colocalize in foci in the nucleus. Ubiquitinated by RFWD3 at stalled replication forks in response to DNA damage: ubiquitination by RFWD3 does not lead to degradation by the proteasome and promotes removal of the RPA complex from stalled replication forks, promoting homologous recombination.

The protein localises to the nucleus. Its function is as follows. As part of the heterotrimeric replication protein A complex (RPA/RP-A), binds and stabilizes single-stranded DNA intermediates that form during DNA replication or upon DNA stress. It prevents their reannealing and in parallel, recruits and activates different proteins and complexes involved in DNA metabolism. Thereby, it plays an essential role both in DNA replication and the cellular response to DNA damage. In the cellular response to DNA damage, the RPA complex controls DNA repair and DNA damage checkpoint activation. Through recruitment of ATRIP activates the ATR kinase a master regulator of the DNA damage response. It is required for the recruitment of the DNA double-strand break repair factors RAD51 and RAD52 to chromatin, in response to DNA damage. Also recruits to sites of DNA damage proteins like XPA and XPG that are involved in nucleotide excision repair and is required for this mechanism of DNA repair. Also plays a role in base excision repair (BER), probably through interaction with UNG. RPA stimulates 5'-3' helicase activity of BRIP1/FANCJ. Also recruits SMARCAL1/HARP, which is involved in replication fork restart, to sites of DNA damage. May also play a role in telomere maintenance. RPA3 has its own single-stranded DNA-binding activity and may be responsible for polarity of the binding of the complex to DNA. As part of the alternative replication protein A complex, aRPA, binds single-stranded DNA and probably plays a role in DNA repair. Compared to the RPA2-containing, canonical RPA complex, may not support chromosomal DNA replication and cell cycle progression through S-phase. The aRPA may not promote efficient priming by DNA polymerase alpha but could support DNA synthesis by polymerase delta in presence of PCNA and replication factor C (RFC), the dual incision/excision reaction of nucleotide excision repair and RAD51-dependent strand exchange. This is Replication protein A 14 kDa subunit (RPA3) from Homo sapiens (Human).